The sequence spans 1226 residues: 3-hydroxy-3-methylglutaryl-coenzyme A reductase (1226 aa).

5 helical membrane-spanning segments follow: residues 17–37 (IETIVSVFVLATLAYFHILSG), 224–244 (ILVVLTGYILMHVTFMRLFLA), 252–272 (FWLSAGIFSSATISFLFTLPM), 337–357 (VGNMILRDYALEIAVLFVGVN), and 373–393 (LLAMDRLMTFTLYTAVLTIMV). The region spanning 223 to 391 (DILVVLTGYI…FTLYTAVLTI (169 aa)) is the SSD domain. A disordered region spans residues 428–449 (LSRKSSKQSVTEPETTKNLRQR). Positions 434–445 (KQSVTEPETTKN) are enriched in polar residues. The chain crosses the membrane as a helical span at residues 481–501 (LLLIASFLTLHILNFCTTLTS). 2 disordered regions span residues 683 to 702 (APAPAPAPEPEPPVNRPPPL) and 722 to 742 (LPIRSPPPVEPITPESREVEP). Pro residues predominate over residues 685–702 (APAPAPEPEPPVNRPPPL). Glu-869 serves as the catalytic Charge relay system. 875-881 (STSRGCK) contacts CoA. NADP(+) contacts are provided by residues 936–938 (SRF) and 963–971 (DAMGMNMIS). Lys-1001 functions as the Charge relay system in the catalytic mechanism. 1030–1032 (VLK) lines the CoA pocket. The active-site Charge relay system is Asp-1077. A helical transmembrane segment spans residues 1150 to 1170 (IIASAVMAGELSLISALAAGH). A CoA-binding site is contributed by 1174-1175 (AH). His-1175 functions as the Proton donor in the catalytic mechanism. 1179–1180 (NR) is a binding site for NADP(+). Positions 1182-1226 (QLNTPMPSRPHTPGPEDVSHVQQLPTPSASDDKGVTAQGYVVEAK) are disordered. Over residues 1201–1210 (HVQQLPTPSA) the composition is skewed to polar residues.

It belongs to the HMG-CoA reductase family.

The protein resides in the endoplasmic reticulum membrane. The enzyme catalyses (R)-mevalonate + 2 NADP(+) + CoA = (3S)-3-hydroxy-3-methylglutaryl-CoA + 2 NADPH + 2 H(+). Its pathway is metabolic intermediate biosynthesis; (R)-mevalonate biosynthesis; (R)-mevalonate from acetyl-CoA: step 3/3. In terms of biological role, HMG-CoA reductase; part of the first module of ergosterol biosynthesis pathway that includes the early steps of the pathway, conserved across all eukaryotes, and which results in the formation of mevalonate from acetyl-coenzyme A (acetyl-CoA). This module also plays a key role in the biosynthesis of triterpenes such as ganoderic acids (GA), a group of highly oxygenated lanostane-type triterpenoids which are well recognized as a main group of unique bioactive compounds in the medicinal mushroom Ganoderma lucidum. In this module, the acetyl-CoA acetyltransferase catalyzes the formation of acetoacetyl-CoA. The hydroxymethylglutaryl-CoA synthase HMGS then condenses acetyl-CoA with acetoacetyl-CoA to form HMG-CoA. The rate-limiting step of the early module is the reduction to mevalonate by the 3-hydroxy-3-methylglutaryl-coenzyme A (HMG-CoA) reductase. The protein is 3-hydroxy-3-methylglutaryl-coenzyme A reductase of Ganoderma lucidum (Ling zhi medicinal fungus).